The chain runs to 370 residues: MSVRVDIGHRLGDFAVEARFESAGRLTALFGPSGSGKTTLINMIAGLIRPDKGCIEVEGRVLVDTDAGIFVPKHRRRIGMVFQDARLFPHMSVASNLRYGRWFTPAKERYADMDAVIDLLGIGPLLGRRPAKLSGGEKQRVAIGRALLASPGLLLMDEPLASLDEARKAEILPYIERLRDETKIPIVYVSHSVAEVARLASDVVMLAQGKVVASGPTEAVMQRLDLLPAEERGEGGAVLDTKVLRHDEAFGMTVLGSAAGEIRVPRLAMQTGAPVRVRIRARDVMIATEKPTGLSALNILPGTIVAISPGEGPAVEVGIDCNGATVLARITEQSRQALELRLGGNVFAVVKTVSFDRANTGAGLPLEVDG.

The ABC transporter domain maps to 2 to 233; it reads SVRVDIGHRL…LDLLPAEERG (232 aa). 31–38 is an ATP binding site; sequence GPSGSGKT. A Mop domain is found at 293-359; the sequence is GLSALNILPG…VKTVSFDRAN (67 aa).

It belongs to the ABC transporter superfamily. Molybdate importer (TC 3.A.1.8) family. In terms of assembly, the complex is composed of two ATP-binding proteins (ModC), two transmembrane proteins (ModB) and a solute-binding protein (ModA).

The protein resides in the cell inner membrane. It carries out the reaction molybdate(out) + ATP + H2O = molybdate(in) + ADP + phosphate + H(+). In terms of biological role, part of the ABC transporter complex ModABC involved in molybdenum import. Responsible for energy coupling to the transport system. This chain is Molybdenum import ATP-binding protein ModC, found in Mesorhizobium japonicum (strain LMG 29417 / CECT 9101 / MAFF 303099) (Mesorhizobium loti (strain MAFF 303099)).